The sequence spans 864 residues: MDEVKKYGKTLEEIEGELMFGKISFMLFLFHCIFSDDFPESLADSDEEHNIFDDEFDAANDETFGGGLDNIGENAEQVNCLVRAYHSLFFQTARLRLDDPVWHHPSSSDQVAPDASAIPFPTFGNGDSSDTFKSSFEAESPFLKKSIWGNGADSSFNIWGSDFGIAAVPPSSSFDLDYNSIAPNEAQQVSPLVQQKPSSQIPSMPSSALTVTCLLYHEFLNLISFKLEDFERMQLGDSTDTLTAALNDLQLGSTNAQSKIEQAPTTLQSAPGEPLKAQTLPKLPVSALSLEELEQKIIRESQTVNVANTQQTPQGSNRFAHPPPGFTANMKNAQHPAMGPPMGMPGMQMPPPPMGYQQMGAIMQELPRLPPLNPQYLPLVPIWLGAIVNNMQLPMGVPPIPPFLYQLLNHYRNPSLVHAMIVHSSIPPNSRPNGPQFSGPQVGPHSPGARGQQRRNSGMPSTRTIYDLALDSFAGYMSFKEREWLIRIQFVQCKGSGDPCIDDYYYVRWRESQIANGWTAHPKPESKQPLPASSESRKDYLERIRRMNYREMQKERLRDREKERQRERQERIDRGEERKPRQTLTDKFATSLGLPSKSSTHNPRHVLDMKAQVDSVDNQAKKLSDEERKNAVQKKLRTMLLRLEGALVLLMEAEELRRTSSSDKSQFKDLTSEEKEQEVEKRTSLIIDEFMGDDLPKLMQMSKGRAVLTRTLKVVGPRDQARIILSLMIAAGLVSKKMYGEIVLDILPVVHQKVSNLHPDQFKYLVGALNLDNIKRQLMDSNMFVRDVMLTLYLVSVKNNQNLLEWSKQTKFSSLKMPSSAPLGFWRKALSAVTDAEITEFAEDIKYSGVVDCHEVAKLIEQSL.

The span at 427–439 shows a compositional bias: polar residues; sequence PPNSRPNGPQFSG. Disordered stretches follow at residues 427-460, 518-539, and 551-602; these read PPNSRPNGPQFSGPQVGPHSPGARGQQRRNSGMP, WTAHPKPESKQPLPASSESRKD, and EMQK…STHN. Residues 551 to 580 are compositionally biased toward basic and acidic residues; it reads EMQKERLRDREKERQRERQERIDRGEERKP.

Belongs to the PAT1 family.

Its subcellular location is the cytoplasm. The protein localises to the P-body. Functionally, RNA-binding protein involved in deadenylation-dependent decapping of mRNAs, leading to the degradation of mRNAs. Acts as a scaffold protein that connects deadenylation and decapping machinery. Required for the recruitment of P-body components such as cgh-1 in somatic blastomeres. May play a role in recruiting the decapping enzyme dcap-1 to cytoplasmic puncta in the cell body of the posterior touch receptor neuron, PLM. In Caenorhabditis briggsae, this protein is Protein PAT1 homolog 1 (patr-1).